A 171-amino-acid polypeptide reads, in one-letter code: 3-hydroxydecanoyl-[acyl-carrier-protein] dehydratase (171 aa).

The active site involves histidine 70.

It belongs to the thioester dehydratase family. FabA subfamily. In terms of assembly, homodimer.

The protein resides in the cytoplasm. It catalyses the reaction a (3R)-hydroxyacyl-[ACP] = a (2E)-enoyl-[ACP] + H2O. It carries out the reaction (3R)-hydroxydecanoyl-[ACP] = (2E)-decenoyl-[ACP] + H2O. The enzyme catalyses (2E)-decenoyl-[ACP] = (3Z)-decenoyl-[ACP]. It functions in the pathway lipid metabolism; fatty acid biosynthesis. Necessary for the introduction of cis unsaturation into fatty acids. Catalyzes the dehydration of (3R)-3-hydroxydecanoyl-ACP to E-(2)-decenoyl-ACP and then its isomerization to Z-(3)-decenoyl-ACP. Can catalyze the dehydratase reaction for beta-hydroxyacyl-ACPs with saturated chain lengths up to 16:0, being most active on intermediate chain length. In Azotobacter vinelandii (strain DJ / ATCC BAA-1303), this protein is 3-hydroxydecanoyl-[acyl-carrier-protein] dehydratase.